Here is a 285-residue protein sequence, read N- to C-terminus: Nucleotide-binding protein GSU1884 (285 aa).

ATP is bound at residue 8 to 15; it reads GLSGSGKS. 59–62 lines the GTP pocket; it reads DIRG.

Belongs to the RapZ-like family.

In terms of biological role, displays ATPase and GTPase activities. In Geobacter sulfurreducens (strain ATCC 51573 / DSM 12127 / PCA), this protein is Nucleotide-binding protein GSU1884.